The primary structure comprises 634 residues: MDDDGGGSPGHYGGGGIHLVCEYCGHGSEYAEDDADNGFFTCRQCSAIHTSTQNTATNPFDFPMTPAHLSAHRRPTQPTPTPKPFPAPRGAATGAAAPDFDDLGEPSEPRDFATGANAWGNPEDVAARVRWRYVRGLQVILQRQLEALVERHRVGSLAASLAGTIWLRWVAASKVFDEMWVHKMLAIAASVEEGHSASKDKQSELEGDAQKSQSSYEFLFLRSLRMMLPVYSTLAVCFLACHVARETILPTDICRWAMEGKLPYVAAFTQVDKLLGSSLNDCPLSSRQLFRPTRVIGAWQLEAAAGSIAQKIGLLLPSVNFYLIAQRFLKELSLPIEKILPHACRIYEWAMPAELWLSSNPGRVPSRVCVMAILIVALRVLYGINGQGIWESIAQTENAVGSDPEASAPHSIEPDSNNSEEFDARELLCTLAASYDKIDVGHDYSKEVHSYLKYCKDVVFTGMTFSLEEEHLIDIFWDMYKGKEVMLLDENAKLCQEKLRTTNGVNKRCRDGRFADTKCCSTPLGNCALQSIKSKMEENGFCYVSPRKRLVSDGYLLYTRRESSGSLIYVAHADYYILLRPFAKLAEVDVRVLHSSVLKLERRLGWIEERVGRSLNTLQNLHDEASDDERPVSD.

Residues 19-51 form an RRN7-type zinc finger; sequence LVCEYCGHGSEYAEDDADNGFFTCRQCSAIHTS. Residues Cys21, Cys24, Cys42, and Cys45 each contribute to the Zn(2+) site. Positions 51–80 are B-reader; that stretch reads STQNTATNPFDFPMTPAHLSAHRRPTQPTP. The disordered stretch occupies residues 56 to 117; it reads ATNPFDFPMT…EPRDFATGAN (62 aa). Over residues 77 to 87 the composition is skewed to pro residues; the sequence is QPTPTPKPFPA. Residues 81–83 are B-linker; sequence TPK. The N-terminal cyclin fold stretch occupies residues 84 to 281; the sequence is PFPAPRGAAT…DKLLGSSLND (198 aa). Residues 88–98 are compositionally biased toward low complexity; sequence PRGAATGAAAP. The segment at 282 to 284 is C-terminal cyclin fold; it reads CPL.

The protein belongs to the RRN7/TAF1B family.

The protein localises to the nucleus. It is found in the nucleolus. Component of RNA polymerase I core factor complex that acts as a GTF2B/TFIIB-like factor and plays a key role in multiple steps during transcription initiation such as pre-initiation complex (PIC) assembly and postpolymerase recruitment events in polymerase I (Pol I) transcription. Binds rDNA promoters and plays a role in Pol I recruitment. This is TATA box-binding protein-associated factor RNA polymerase I subunit B from Oryza sativa subsp. indica (Rice).